Reading from the N-terminus, the 348-residue chain is Holliday junction branch migration complex subunit RuvB (348 aa).

A compositionally biased stretch (polar residues) spans Met-1 to Ser-10. Residues Met-1–Leu-41 are disordered. Positions Pro-13 to Tyr-197 are large ATPase domain (RuvB-L). Basic and acidic residues predominate over residues Ser-28–Leu-41. Leu-36, Arg-37, Gly-78, Lys-81, Thr-82, Thr-83, Arg-187, Tyr-197, and Arg-234 together coordinate ATP. Thr-82 provides a ligand contact to Mg(2+). The small ATPAse domain (RuvB-S) stretch occupies residues Gly-198–Arg-269. The segment at His-272–Ala-348 is head domain (RuvB-H). DNA contacts are provided by Arg-327 and Arg-332.

It belongs to the RuvB family. Homohexamer. Forms an RuvA(8)-RuvB(12)-Holliday junction (HJ) complex. HJ DNA is sandwiched between 2 RuvA tetramers; dsDNA enters through RuvA and exits via RuvB. An RuvB hexamer assembles on each DNA strand where it exits the tetramer. Each RuvB hexamer is contacted by two RuvA subunits (via domain III) on 2 adjacent RuvB subunits; this complex drives branch migration. In the full resolvosome a probable DNA-RuvA(4)-RuvB(12)-RuvC(2) complex forms which resolves the HJ.

The protein localises to the cytoplasm. It carries out the reaction ATP + H2O = ADP + phosphate + H(+). In terms of biological role, the RuvA-RuvB-RuvC complex processes Holliday junction (HJ) DNA during genetic recombination and DNA repair, while the RuvA-RuvB complex plays an important role in the rescue of blocked DNA replication forks via replication fork reversal (RFR). RuvA specifically binds to HJ cruciform DNA, conferring on it an open structure. The RuvB hexamer acts as an ATP-dependent pump, pulling dsDNA into and through the RuvAB complex. RuvB forms 2 homohexamers on either side of HJ DNA bound by 1 or 2 RuvA tetramers; 4 subunits per hexamer contact DNA at a time. Coordinated motions by a converter formed by DNA-disengaged RuvB subunits stimulates ATP hydrolysis and nucleotide exchange. Immobilization of the converter enables RuvB to convert the ATP-contained energy into a lever motion, pulling 2 nucleotides of DNA out of the RuvA tetramer per ATP hydrolyzed, thus driving DNA branch migration. The RuvB motors rotate together with the DNA substrate, which together with the progressing nucleotide cycle form the mechanistic basis for DNA recombination by continuous HJ branch migration. Branch migration allows RuvC to scan DNA until it finds its consensus sequence, where it cleaves and resolves cruciform DNA. This chain is Holliday junction branch migration complex subunit RuvB, found in Parasynechococcus marenigrum (strain WH8102).